Reading from the N-terminus, the 377-residue chain is Chaperone protein DnaJ (377 aa).

In terms of domain architecture, J spans 4–69 (DYYEALGVER…QKRAAYDRFG (66 aa)). The segment at 135–213 (GKTAQIRVPT…CHGQGRVTQE (79 aa)) adopts a CR-type zinc-finger fold. Residues cysteine 148, cysteine 151, cysteine 165, cysteine 168, cysteine 187, cysteine 190, cysteine 201, and cysteine 204 each contribute to the Zn(2+) site. 4 CXXCXGXG motif repeats span residues 148 to 155 (CDECSGSG), 165 to 172 (CTMCSGSG), 187 to 194 (CPTCNGRG), and 201 to 208 (CGKCHGQG).

Belongs to the DnaJ family. Homodimer. Zn(2+) is required as a cofactor.

The protein localises to the cytoplasm. Participates actively in the response to hyperosmotic and heat shock by preventing the aggregation of stress-denatured proteins and by disaggregating proteins, also in an autonomous, DnaK-independent fashion. Unfolded proteins bind initially to DnaJ; upon interaction with the DnaJ-bound protein, DnaK hydrolyzes its bound ATP, resulting in the formation of a stable complex. GrpE releases ADP from DnaK; ATP binding to DnaK triggers the release of the substrate protein, thus completing the reaction cycle. Several rounds of ATP-dependent interactions between DnaJ, DnaK and GrpE are required for fully efficient folding. Also involved, together with DnaK and GrpE, in the DNA replication of plasmids through activation of initiation proteins. The protein is Chaperone protein DnaJ of Brucella anthropi (strain ATCC 49188 / DSM 6882 / CCUG 24695 / JCM 21032 / LMG 3331 / NBRC 15819 / NCTC 12168 / Alc 37) (Ochrobactrum anthropi).